The chain runs to 1182 residues: CRISPR-associated endoribonuclease Cas13a (1182 aa).

Positions 132 to 279 (FNNLIEKVQN…ENNSDNKLKQ (148 aa)) form a coiled coil. Residues 366 to 508 (YIKNTGQLET…NNEEIKGYFI (143 aa)) form an HEPN-like fold 1 region. Positions 896–955 (KVEKENIEDYNKKEEIEQKKKSNIEKLQDLKVELHKKWEQNKITEKEIEKYNNTTRKINE) form a coiled coil. Residues 965-1120 (LQNVYLLHEM…QNHILKSTKT (156 aa)) are HEPN-like fold 2.

Belongs to the CRISPR-associated endoribonuclease Cas13a family. A divalent metal cation is required as a cofactor.

Its activity is regulated as follows. Target RNA acts as an activator for non-specific ssRNA degradation. CRISPR (clustered regularly interspaced short palindromic repeat), is an adaptive immune system that provides protection against mobile genetic elements (viruses, transposable elements and conjugative plasmids). CRISPR clusters contain sequences complementary to antecedent mobile elements and target invading nucleic acids. Unlike many single-component effectors, this CRISPR-Cas system targets RNA. CRISPR clusters are transcribed from pre-CRISPR RNA (crRNA) and processed into crRNA by this protein. Cleaves linear target ssRNA in a pre-crRNA-dependent fashion, preferentially before U residues. Binding a viable target RNA target activates this protein for non-specific RNA degradation in vitro (called collateral RNA degradation), which is fairly sensitive as it requires picomolar levels of viable target RNA. This Leptotrichia wadei (strain F0279) protein is CRISPR-associated endoribonuclease Cas13a.